A 319-amino-acid polypeptide reads, in one-letter code: Olfactory receptor 10Q1 (319 aa).

The Extracellular segment spans residues 1–29 (MPVGKLVFNQSEPTEFVFRAFTTATEFQV). Asn9 carries an N-linked (GlcNAc...) asparagine glycan. The chain crosses the membrane as a helical span at residues 30-50 (LLFLLFLLLYLMILCGNTAII). Residues 51 to 58 (WVVCTHST) are Cytoplasmic-facing. A helical transmembrane segment spans residues 59–79 (LRTPMYFFLSNLSFLELCYTT). Over 80–103 (VVVPLMLSNILGAQKPISLAGCGA) the chain is Extracellular. Cys101 and Cys194 form a disulfide bridge. The helical transmembrane segment at 104–124 (QMFFFVTLGSTDCFLLAIMAY) threads the bilayer. Residues 125 to 143 (DRYVAICHPLHYTLIMTRE) lie on the Cytoplasmic side of the membrane. Residues 144–164 (LCTQMLGGALGLALFPSLQLT) traverse the membrane as a helical segment. Residues 165-202 (ALIFTLPFCGHHQEINHFLCDVPPVLRLACADIRVHQA) lie on the Extracellular side of the membrane. The helical transmembrane segment at 203-222 (VLYVVSILVLTIPFLLICVS) threads the bilayer. Residues 223 to 242 (YVFITCAILSIRSAEGRRRA) lie on the Cytoplasmic side of the membrane. The helical transmembrane segment at 243–263 (FSTCSFHLTVVLLQYGCCSLV) threads the bilayer. Topologically, residues 264–276 (YLRPRSSTSEDED) are extracellular. The helical transmembrane segment at 277-297 (SQIALVYTFVTPLLNPLLYSL) threads the bilayer. Over 298-319 (RNKDVKGALRSAIIRKAASDAN) the chain is Cytoplasmic.

This sequence belongs to the G-protein coupled receptor 1 family.

The protein resides in the cell membrane. Odorant receptor. This is Olfactory receptor 10Q1 (OR10Q1) from Homo sapiens (Human).